The following is a 207-amino-acid chain: Ribosomal RNA small subunit methyltransferase G (207 aa).

S-adenosyl-L-methionine is bound by residues Gly76, Gln81, 127-128, and Arg141; that span reads VE.

This sequence belongs to the methyltransferase superfamily. RNA methyltransferase RsmG family.

It localises to the cytoplasm. The enzyme catalyses guanosine(527) in 16S rRNA + S-adenosyl-L-methionine = N(7)-methylguanosine(527) in 16S rRNA + S-adenosyl-L-homocysteine. In terms of biological role, specifically methylates the N7 position of guanine in position 527 of 16S rRNA. The polypeptide is Ribosomal RNA small subunit methyltransferase G (Neisseria meningitidis serogroup A / serotype 4A (strain DSM 15465 / Z2491)).